We begin with the raw amino-acid sequence, 207 residues long: Crossover junction endodeoxyribonuclease RuvC (207 aa).

Residues D11, E71, and D143 contribute to the active site. The Mg(2+) site is built by D11, E71, and D143.

It belongs to the RuvC family. In terms of assembly, homodimer which binds Holliday junction (HJ) DNA. The HJ becomes 2-fold symmetrical on binding to RuvC with unstacked arms; it has a different conformation from HJ DNA in complex with RuvA. In the full resolvosome a probable DNA-RuvA(4)-RuvB(12)-RuvC(2) complex forms which resolves the HJ. It depends on Mg(2+) as a cofactor.

The protein resides in the cytoplasm. The enzyme catalyses Endonucleolytic cleavage at a junction such as a reciprocal single-stranded crossover between two homologous DNA duplexes (Holliday junction).. Its function is as follows. The RuvA-RuvB-RuvC complex processes Holliday junction (HJ) DNA during genetic recombination and DNA repair. Endonuclease that resolves HJ intermediates. Cleaves cruciform DNA by making single-stranded nicks across the HJ at symmetrical positions within the homologous arms, yielding a 5'-phosphate and a 3'-hydroxyl group; requires a central core of homology in the junction. The consensus cleavage sequence is 5'-(A/T)TT(C/G)-3'. Cleavage occurs on the 3'-side of the TT dinucleotide at the point of strand exchange. HJ branch migration catalyzed by RuvA-RuvB allows RuvC to scan DNA until it finds its consensus sequence, where it cleaves and resolves the cruciform DNA. The sequence is that of Crossover junction endodeoxyribonuclease RuvC from Methylobacterium radiotolerans (strain ATCC 27329 / DSM 1819 / JCM 2831 / NBRC 15690 / NCIMB 10815 / 0-1).